The chain runs to 610 residues: F-box/LRR-repeat protein 4 (610 aa).

The 48-residue stretch at 5 to 52 folds into the F-box domain; the sequence is DRINNCLPEELILEIFRRLESKPNRDACSLVCKRWLSLERFSRTTLRI. LRR repeat units follow at residues 53-79, 124-149, 150-175, 178-200, 201-227, 228-253, 256-277, 278-303, 304-329, 330-355, 356-381, 382-407, 408-433, 434-459, 460-484, 485-510, 511-536, 537-562, and 563-588; these read GASF…HVDE, SSSL…SLIW, CPNV…DLQG, VGDQ…NLRF, CEGL…GVAA, SAKI…YLDS, IHDK…LKLQ, CVSV…ALYS, FQHF…TLSD, CYFV…EING, CHNI…ALLY, CQRI…HLVD, CSGI…HIRR, CYEI…SLRF, CDKV…NVSG, CNQI…DISV, LQNI…VLSH, CHHI…HMVY, and CPGI…LIEK. The disordered stretch occupies residues 88–125; it reads LSPSPKRKRGRDSSSPSSSKRKKLTDKTHSGAENVESS.

This is F-box/LRR-repeat protein 4 (FBL4) from Arabidopsis thaliana (Mouse-ear cress).